The following is a 234-amino-acid chain: Glutathione S-transferase U16 (234 aa).

In terms of domain architecture, GST N-terminal spans 5–85 (EEVKLLGVWY…YIDETWNSSA (81 aa)). Glutathione-binding positions include 15 to 16 (SP), 42 to 43 (SK), 56 to 57 (KV), and 69 to 70 (ES). The 128-residue stretch at 92–219 (HPYDRALARF…APEIEKVAEF (128 aa)) folds into the GST C-terminal domain.

It belongs to the GST superfamily. Tau family.

The protein localises to the cytoplasm. It localises to the cytosol. The enzyme catalyses RX + glutathione = an S-substituted glutathione + a halide anion + H(+). Functionally, may be involved in the conjugation of reduced glutathione to a wide number of exogenous and endogenous hydrophobic electrophiles and have a detoxification role against certain herbicides. The protein is Glutathione S-transferase U16 (GSTU16) of Arabidopsis thaliana (Mouse-ear cress).